Reading from the N-terminus, the 230-residue chain is Response regulator MprA (230 aa).

A Response regulatory domain is found at 4–118 (RILVVDDDRA…ELLARMRALL (115 aa)). D48 carries the post-translational modification 4-aspartylphosphate. The ompR/PhoB-type DNA-binding region spans 129-227 (SMAMRFSDLT…VRGVGYVLRE (99 aa)).

As to quaternary structure, monomer. Interaction with each conserved 8-bp repeat requires tandem binding by two protein monomers. Phosphorylated and dephosphorylated by MprB.

Its subcellular location is the cytoplasm. In terms of biological role, member of the two-component regulatory system MprB/MprA which contributes to maintaining a balance among several systems involved in stress resistance and is required for establishment and maintenance of persistent infection in the host. Functions as a transcriptional regulator that recognizes a 19-bp nucleotide motif comprizing two loosely conserved 8-bp direct DNA-binding motif repeats separated by a 3-bp spacer region. MprB/MprA up-regulates expression of mprA and pepD. In Mycobacterium bovis (strain ATCC BAA-935 / AF2122/97), this protein is Response regulator MprA (mprA).